Consider the following 120-residue polypeptide: NAD(P)H-quinone oxidoreductase subunit 3 (120 aa).

The next 3 helical transmembrane spans lie at 6-26 (GYDAFLGFLLIAAAVPVLALV), 64-84 (MFALVFVIFDVETVFLYPWAV), and 89-109 (LGLLAFIEALIFIAILVVALA).

Belongs to the complex I subunit 3 family. NDH-1 can be composed of about 15 different subunits; different subcomplexes with different compositions have been identified which probably have different functions.

It is found in the cellular thylakoid membrane. It catalyses the reaction a plastoquinone + NADH + (n+1) H(+)(in) = a plastoquinol + NAD(+) + n H(+)(out). The catalysed reaction is a plastoquinone + NADPH + (n+1) H(+)(in) = a plastoquinol + NADP(+) + n H(+)(out). In terms of biological role, NDH-1 shuttles electrons from an unknown electron donor, via FMN and iron-sulfur (Fe-S) centers, to quinones in the respiratory and/or the photosynthetic chain. The immediate electron acceptor for the enzyme in this species is believed to be plastoquinone. Couples the redox reaction to proton translocation, and thus conserves the redox energy in a proton gradient. Cyanobacterial NDH-1 also plays a role in inorganic carbon-concentration. The polypeptide is NAD(P)H-quinone oxidoreductase subunit 3 (Synechococcus sp. (strain WH7803)).